We begin with the raw amino-acid sequence, 56 residues long: uncharacterized protein (56 aa).

A helical membrane pass occupies residues 6–26 (MLLIMLYMVLVVNDLILYNIL).

The protein localises to the membrane. This is an uncharacterized protein from Dictyostelium discoideum (Social amoeba).